Consider the following 808-residue polypeptide: Disks large-associated protein 5 (808 aa).

Phosphoserine occurs at positions 66 and 70. Residues 88-119 adopt a coiled-coil conformation; the sequence is QRKQLLQKYKEEKQLQKLKEQREKAKRGVFKV. Residues 134–282 are disordered; sequence QRGAKAEPEK…QTRETSEMGP (149 aa). Composition is skewed to basic and acidic residues over residues 135 to 145 and 180 to 193; these read RGAKAEPEKAF and QTSEKQPLDRERKV. Phosphoserine is present on S201. Basic and acidic residues-rich tracts occupy residues 232–241 and 249–278; these read TNEKGSERMR and KKPEGKPDKVIPSKVERDEKHLDSQTRETS. Phosphoserine is present on S328. Phosphothreonine is present on residues T337 and T386. Positions 377 to 413 are disordered; sequence HVLNQKGASTSDSNHASVKGVPCSEGSEGQTSQPPHD. The span at 382 to 392 shows a compositional bias: polar residues; the sequence is KGASTSDSNHA. S598 carries the post-translational modification Phosphoserine. The residue at position 607 (S607) is a Phosphoserine; by AURKA. A Phosphoserine modification is found at S612. T617 is modified (phosphothreonine). S620 carries the post-translational modification Phosphoserine. A disordered region spans residues 629–654; it reads RAAGDLLRQKMPLKKPDPQSSKSEHV. A compositionally biased stretch (basic and acidic residues) spans 642–654; it reads KKPDPQSSKSEHV. Residue T728 is modified to Phosphothreonine. Positions 735–757 are disordered; the sequence is SNPETNTSSQSNTSQEEAEASQS. At S743 the chain carries Phosphoserine. Residue S797 is modified to Phosphoserine; by AURKA. S806 carries the post-translational modification Phosphoserine.

Belongs to the SAPAP family. In terms of assembly, interacts with CDC2. Interacts with the C-terminal proline-rich region of FBXO7. Recruited by FBXO7 to a SCF (SKP1-CUL1-F-box) protein complex in a CDC2/Cyclin B-phosphorylation dependent manner. Interacts with CDH1. Post-translationally, ubiquitinated, leading to its degradation. In terms of processing, decreased phosphorylation levels are associated with the differentiation of intestinal epithelial cells. As to expression, expressed at low levels in normal resting liver. Up-regulated in regenerating liver after partial hepatectomy.

Its subcellular location is the nucleus. It localises to the cytoplasm. The protein localises to the cytoskeleton. It is found in the spindle. Potential cell cycle regulator that may play a role in carcinogenesis of cancer cells. Mitotic phosphoprotein regulated by the ubiquitin-proteasome pathway. Key regulator of adherens junction integrity and differentiation that may be involved in CDH1-mediated adhesion and signaling in epithelial cells. In Mus musculus (Mouse), this protein is Disks large-associated protein 5 (Dlgap5).